Reading from the N-terminus, the 451-residue chain is Trigger factor (451 aa).

The region spanning 165-250 is the PPIase FKBP-type domain; it reads DDKLTIDFEG…LRQIQAREAL (86 aa).

The protein belongs to the FKBP-type PPIase family. Tig subfamily.

It localises to the cytoplasm. The catalysed reaction is [protein]-peptidylproline (omega=180) = [protein]-peptidylproline (omega=0). Its function is as follows. Involved in protein export. Acts as a chaperone by maintaining the newly synthesized protein in an open conformation. Functions as a peptidyl-prolyl cis-trans isomerase. This chain is Trigger factor, found in Helicobacter pylori (strain Shi470).